A 194-amino-acid polypeptide reads, in one-letter code: Sigma factor AlgU negative regulatory protein (194 aa).

Residues 89-105 traverse the membrane as a helical segment; the sequence is LAVAASVTLAVLAGVRL.

Belongs to the RseA family.

The protein localises to the cell membrane. In terms of biological role, negative regulator of the sigma factor AlgU. Plays a role in the differentiation of P.aeruginosa into the alginate-producing form. Inactivation of mucA causes a switch from the non-mucoid to mucoid state resulting in constitutive expression of alginate biosynthetic genes. In Pseudomonas aeruginosa (strain ATCC 15692 / DSM 22644 / CIP 104116 / JCM 14847 / LMG 12228 / 1C / PRS 101 / PAO1), this protein is Sigma factor AlgU negative regulatory protein (mucA).